The chain runs to 406 residues: Tyrosine--tRNA ligase (406 aa).

Tyrosine 35 serves as a coordination point for L-tyrosine. A 'HIGH' region motif is present at residues 40–49 (ATSASLHIGH). L-tyrosine is bound by residues tyrosine 167 and glutamine 171. Residues 227–231 (KMGKS) carry the 'KMSKS' region motif. Lysine 230 is an ATP binding site. The S4 RNA-binding domain maps to 341 to 405 (ILLVDLMVLA…IGKKKILRIV (65 aa)).

This sequence belongs to the class-I aminoacyl-tRNA synthetase family. TyrS type 1 subfamily. As to quaternary structure, homodimer.

It localises to the cytoplasm. It carries out the reaction tRNA(Tyr) + L-tyrosine + ATP = L-tyrosyl-tRNA(Tyr) + AMP + diphosphate + H(+). Its function is as follows. Catalyzes the attachment of tyrosine to tRNA(Tyr) in a two-step reaction: tyrosine is first activated by ATP to form Tyr-AMP and then transferred to the acceptor end of tRNA(Tyr). The sequence is that of Tyrosine--tRNA ligase from Borrelia duttonii (strain Ly).